A 131-amino-acid polypeptide reads, in one-letter code: Holo-[acyl-carrier-protein] synthase (131 aa).

Mg(2+) is bound by residues aspartate 8 and glutamate 59.

Belongs to the P-Pant transferase superfamily. AcpS family. Requires Mg(2+) as cofactor.

Its subcellular location is the cytoplasm. The catalysed reaction is apo-[ACP] + CoA = holo-[ACP] + adenosine 3',5'-bisphosphate + H(+). Functionally, transfers the 4'-phosphopantetheine moiety from coenzyme A to a Ser of acyl-carrier-protein. The polypeptide is Holo-[acyl-carrier-protein] synthase (Orientia tsutsugamushi (strain Ikeda) (Rickettsia tsutsugamushi)).